We begin with the raw amino-acid sequence, 689 residues long: MATSQRKILVTSALPYANGPIHLGHMLEYIQTDIWSRYQKLRGHECHYICADDAHGTPIMLKAQQLGIAPEDMIAQVNKEHQQDFADFNVAFDNYHSTHSEENRLMASDIYLKLRDNGYIKSKSISQLFDPEKSMFLPDRFVKGTCPKCKSPDQYGDNCDSCGATYSPTELINPKSAVSGATPVMKDTEHFFFDLPAFEGMLKEWTRSGALQVEMANKLDEWFEQGLQQWDITRDAPYFGFEIPDAPGKYFYVWLDAPIGYMGSFKNLCAKRPELSFDEFWGKDSTAEVYHFIGKDIVYFHSLFWPAMLHGSGYRQPNSVYAHGYVTVNGAKMSKSKGTFIKARTYLDHLDPEYLRYYYAAKLSSRIDDLDLNLEDFAQRVNSDLVGKLVNLASRTAGFITKRFNGKLAKINDTTLTEAFLAKQDVIADFYESREYGKAMREIMALADIANGFVADAAPWQMVKHDDQQEAAHQVCSNALNLFRILVTYLKPVLPRLAQDVEAFFQLPLTWDALSQDLAGHEIAPFKAMMQRVELDKVNAMVADSKDNLQVTADAPKTAAPEKTAEASSVSSEPLVDDPISETINFDDFAKIDLRIARIIKAEHVADADKLLKLQLDIGGETRQVFAGIKSAYSPEDLEGKLTVMVANLAPRKMRFGMSEGMVLAAGPGGSDLWILEPHEGAQPGMRVK.

The 'HIGH' region motif lies at 15–25; that stretch reads PYANGPIHLGH. 4 residues coordinate Zn(2+): Cys-146, Cys-149, Cys-159, and Cys-162. Residues 332–336 carry the 'KMSKS' region motif; sequence KMSKS. Lys-335 contributes to the ATP binding site. Positions 554-574 are disordered; sequence DAPKTAAPEKTAEASSVSSEP. In terms of domain architecture, tRNA-binding spans 588–689; that stretch reads DFAKIDLRIA…EGAQPGMRVK (102 aa).

The protein belongs to the class-I aminoacyl-tRNA synthetase family. MetG type 1 subfamily. Homodimer. The cofactor is Zn(2+).

The protein resides in the cytoplasm. The catalysed reaction is tRNA(Met) + L-methionine + ATP = L-methionyl-tRNA(Met) + AMP + diphosphate. In terms of biological role, is required not only for elongation of protein synthesis but also for the initiation of all mRNA translation through initiator tRNA(fMet) aminoacylation. The protein is Methionine--tRNA ligase of Shewanella baltica (strain OS185).